The sequence spans 324 residues: Ribose-phosphate pyrophosphokinase 1 (324 aa).

Residues 39–41 and 98–99 each bind ATP; these read DGE and RQ. Mg(2+) contacts are provided by H132 and D174. The active site involves K197. D-ribose 5-phosphate contacts are provided by residues R199, D223, and 227–231; that span reads DTAGT.

This sequence belongs to the ribose-phosphate pyrophosphokinase family. Class I subfamily. Homohexamer. Mg(2+) is required as a cofactor.

The protein localises to the cytoplasm. It catalyses the reaction D-ribose 5-phosphate + ATP = 5-phospho-alpha-D-ribose 1-diphosphate + AMP + H(+). The protein operates within metabolic intermediate biosynthesis; 5-phospho-alpha-D-ribose 1-diphosphate biosynthesis; 5-phospho-alpha-D-ribose 1-diphosphate from D-ribose 5-phosphate (route I): step 1/1. Functionally, involved in the biosynthesis of the central metabolite phospho-alpha-D-ribosyl-1-pyrophosphate (PRPP) via the transfer of pyrophosphoryl group from ATP to 1-hydroxyl of ribose-5-phosphate (Rib-5-P). The chain is Ribose-phosphate pyrophosphokinase 1 from Lactococcus lactis subsp. lactis (strain IL1403) (Streptococcus lactis).